Consider the following 456-residue polypeptide: Kynurenine 3-monooxygenase (456 aa).

It belongs to the aromatic-ring hydroxylase family. KMO subfamily. It depends on FAD as a cofactor.

It catalyses the reaction L-kynurenine + NADPH + O2 + H(+) = 3-hydroxy-L-kynurenine + NADP(+) + H2O. It participates in cofactor biosynthesis; NAD(+) biosynthesis; quinolinate from L-kynurenine: step 1/3. Functionally, catalyzes the hydroxylation of L-kynurenine (L-Kyn) to form 3-hydroxy-L-kynurenine (L-3OHKyn). Required for synthesis of quinolinic acid. This chain is Kynurenine 3-monooxygenase, found in Xanthomonas campestris pv. campestris (strain B100).